The chain runs to 413 residues: Histidine--tRNA ligase (413 aa).

Belongs to the class-II aminoacyl-tRNA synthetase family. In terms of assembly, homodimer.

The protein resides in the cytoplasm. It carries out the reaction tRNA(His) + L-histidine + ATP = L-histidyl-tRNA(His) + AMP + diphosphate + H(+). The sequence is that of Histidine--tRNA ligase from Geobacter metallireducens (strain ATCC 53774 / DSM 7210 / GS-15).